A 345-amino-acid polypeptide reads, in one-letter code: Beta-2-glycoprotein 1 (345 aa).

The signal sequence occupies residues 1-19 (MVSPVLALFSAFLCHVAIA). Sushi domains lie at 21 to 81 (RICP…RCVP), 82 to 139 (RVCP…ACAR), 140 to 202 (ITCP…ECLE), and 203 to 262 (VKCP…TCRE). 11 cysteine pairs are disulfide-bonded: cysteine 23-cysteine 66, cysteine 51-cysteine 79, cysteine 84-cysteine 124, cysteine 110-cysteine 137, cysteine 142-cysteine 188, cysteine 174-cysteine 200, cysteine 205-cysteine 248, cysteine 234-cysteine 260, cysteine 264-cysteine 315, cysteine 300-cysteine 325, and cysteine 307-cysteine 345. O-linked (GalNAc...) threonine glycosylation is present at threonine 33. Residues asparagine 105, asparagine 117, asparagine 162, asparagine 183, and asparagine 193 are each glycosylated (N-linked (GlcNAc...) asparagine). The tract at residues 263-345 (SCKLPVKKAT…KTDASELTPC (83 aa)) is sushi-like.

In terms of tissue distribution, expressed by the liver and secreted in plasma.

It localises to the secreted. In terms of biological role, binds to various kinds of negatively charged substances such as heparin, phospholipids, and dextran sulfate. May prevent activation of the intrinsic blood coagulation cascade by binding to phospholipids on the surface of damaged cells. In Mus musculus (Mouse), this protein is Beta-2-glycoprotein 1 (Apoh).